Consider the following 315-residue polypeptide: Glutamyl-Q tRNA(Asp) synthetase (315 aa).

Residues 21–25 (RFAPS) and E63 contribute to the L-glutamate site. The 'HIGH' region motif lies at 24–34 (PSPSGLLHFGS). Residues C119, C121, Y133, and C137 each coordinate Zn(2+). Residues Y190 and R208 each contribute to the L-glutamate site. The short motif at 251-255 (KLSKQ) is the 'KMSKS' region element. K254 contacts ATP.

This sequence belongs to the class-I aminoacyl-tRNA synthetase family. GluQ subfamily. It depends on Zn(2+) as a cofactor.

Catalyzes the tRNA-independent activation of glutamate in presence of ATP and the subsequent transfer of glutamate onto a tRNA(Asp). Glutamate is transferred on the 2-amino-5-(4,5-dihydroxy-2-cyclopenten-1-yl) moiety of the queuosine in the wobble position of the QUC anticodon. The polypeptide is Glutamyl-Q tRNA(Asp) synthetase (Colwellia psychrerythraea (strain 34H / ATCC BAA-681) (Vibrio psychroerythus)).